The chain runs to 53 residues: Large ribosomal subunit protein bL33A (53 aa).

The protein belongs to the bacterial ribosomal protein bL33 family.

In Mycoplasmoides gallisepticum (strain R(low / passage 15 / clone 2)) (Mycoplasma gallisepticum), this protein is Large ribosomal subunit protein bL33A.